A 36-amino-acid polypeptide reads, in one-letter code: Histone H1-like protein EM5 (36 aa).

One can recognise an H15 domain in the interval 1–36; sequence MITAAVGALKERGGSSRQAILKYIQANFKVQANPAA.

It belongs to the histone H1/H5 family. Sperm.

It localises to the nucleus. Its subcellular location is the chromosome. This Ensis minor (Razor shell) protein is Histone H1-like protein EM5.